Here is a 437-residue protein sequence, read N- to C-terminus: UDP-N-acetylmuramoylalanine--D-glutamate ligase (437 aa).

Position 115–121 (115–121 (GSNGKST)) interacts with ATP.

This sequence belongs to the MurCDEF family.

The protein localises to the cytoplasm. The catalysed reaction is UDP-N-acetyl-alpha-D-muramoyl-L-alanine + D-glutamate + ATP = UDP-N-acetyl-alpha-D-muramoyl-L-alanyl-D-glutamate + ADP + phosphate + H(+). It functions in the pathway cell wall biogenesis; peptidoglycan biosynthesis. Its function is as follows. Cell wall formation. Catalyzes the addition of glutamate to the nucleotide precursor UDP-N-acetylmuramoyl-L-alanine (UMA). The protein is UDP-N-acetylmuramoylalanine--D-glutamate ligase of Vibrio parahaemolyticus serotype O3:K6 (strain RIMD 2210633).